The chain runs to 445 residues: MGSQELQRKLGFWAVLAIAVGTTVGSGIFVSVGEVAKAAGTPWLTVLAFVIGGLIVIPQMCVYAELSTAYPENGADYVYLKNAGSRPLAFLSGWASFWANDAPSLSIMALAIVSNLGFLTPIDPLLGKFIAAGLIIAFMLLHLRSVEGGAAFQTLITIAKIIPFTIVIGLGIFWFKAENFAAPATTAIGATGSFMALLAGISATSWSYTGMASICYMTGEIKNPGKTMPRALIGSCLLVLVLYTLLALVISGLMPFDKLANSETPISDALTWIPALGSTAGIFVAITAMIVILGSLSSCVMYQPRLEYAMAKDNLFFKCFGHVHPKYNTPDVSIILQGALGIFFIFVSDLTSLLGYFTLVMCFKNTLTFGSIIWCRKRDDYKPLWRTPAFGLMTPLAIASSLILVASTFVWAPIPGLICAVIVIATGLPAYAFWAKRSRQLNALS.

11 helical membrane-spanning segments follow: residues 10 to 32 (LGFW…FVSV), 39 to 61 (AGTP…PQMC), 97 to 119 (FWAN…LGFL), 126 to 143 (LGKF…LLHL), 153 to 175 (QTLI…IFWF), 188 to 210 (IGAT…SYTG), 230 to 252 (RALI…VISG), 272 to 294 (WIPA…VILG), 341 to 363 (GIFF…VMCF), 384 to 406 (LWRT…ILVA), and 411 to 433 (WAPI…AYAF).

The protein belongs to the amino acid-polyamine-organocation (APC) superfamily.

It is found in the cell inner membrane. The catalysed reaction is N(6)-(D-fructosyl)-L-lysine(in) = N(6)-(D-fructosyl)-L-lysine(out). It catalyses the reaction N(6)-(D-psicosyl)-L-lysine(in) = N(6)-(D-psicosyl)-L-lysine(out). It functions in the pathway carbohydrate metabolism; fructoselysine degradation. In terms of biological role, is likely involved in the transport of fructoselysine and psicoselysine to the cytoplasm, where they are degraded. This chain is Probable fructoselysine/psicoselysine transporter FrlA (frlA), found in Escherichia coli O157:H7.